The chain runs to 463 residues: RuvB-like 2 (463 aa).

ATP is bound at residue 77–84; sequence GQPGTGKT.

This sequence belongs to the RuvB family. In terms of assembly, forms homohexameric rings. Can form a dodecamer with ruvbl1 made of two stacked hexameric rings. Component of the chromatin-remodeling Ino80 complex. Component of some MLL1/MLL complex.

It is found in the nucleus. Its subcellular location is the dynein axonemal particle. It carries out the reaction ATP + H2O = ADP + phosphate + H(+). Has double-stranded DNA-stimulated ATPase activity. Has ATP-dependent DNA helicase (5' to 3') activity suggesting a role in nuclear processes such as recombination and transcription. Represses gene activation mediated by beta-catenin. Proposed core component of the chromatin remodeling Ino80 complex which exhibits DNA- and nucleosome-activated ATPase activity and catalyzes ATP-dependent nucleosome sliding. Involved in the endoplasmic reticulum (ER)-associated degradation (ERAD) pathway where it negatively regulates expression of ER stress response genes. May act as a regulator of embryonic heart growth. The sequence is that of RuvB-like 2 (ruvbl2) from Danio rerio (Zebrafish).